The sequence spans 769 residues: Sensor protein DivL (769 aa).

A helical membrane pass occupies residues 6–26; it reads LILAAAAGAVCLAISVALWSH. The Histidine kinase domain maps to 547 to 758; that stretch reads NVSYELRTPL…TFTCHLPETQ (212 aa). At Tyr-550 the chain carries Phosphotyrosine; by autocatalysis.

Post-translationally, autophosphorylated.

It is found in the cell membrane. It carries out the reaction ATP + protein L-histidine = ADP + protein N-phospho-L-histidine.. In terms of biological role, required for cell division and growth. It catalyzes the phosphorylation of CtrA and activates transcription in vitro of the cell cycle-regulated fliF promoter. This is Sensor protein DivL (divL) from Caulobacter vibrioides (strain ATCC 19089 / CIP 103742 / CB 15) (Caulobacter crescentus).